The sequence spans 175 residues: Ribosome maturation factor RimM (175 aa).

The PRC barrel domain occupies 96–175; that stretch reads EGDFYWHDLI…TIEVDWDAGF (80 aa).

The protein belongs to the RimM family. As to quaternary structure, binds ribosomal protein uS19.

The protein localises to the cytoplasm. Its function is as follows. An accessory protein needed during the final step in the assembly of 30S ribosomal subunit, possibly for assembly of the head region. Essential for efficient processing of 16S rRNA. May be needed both before and after RbfA during the maturation of 16S rRNA. It has affinity for free ribosomal 30S subunits but not for 70S ribosomes. The chain is Ribosome maturation factor RimM from Histophilus somni (strain 129Pt) (Haemophilus somnus).